The primary structure comprises 550 residues: Hydroxylamine reductase (550 aa).

Cys3, Cys6, Cys18, and Cys25 together coordinate [2Fe-2S] cluster. His249, Glu273, Cys317, Cys405, Cys433, Cys458, Glu492, and Lys494 together coordinate hybrid [4Fe-2O-2S] cluster. A Cysteine persulfide modification is found at Cys405.

The protein belongs to the HCP family. It depends on [2Fe-2S] cluster as a cofactor. Hybrid [4Fe-2O-2S] cluster serves as cofactor.

Its subcellular location is the cytoplasm. The enzyme catalyses A + NH4(+) + H2O = hydroxylamine + AH2 + H(+). Functionally, catalyzes the reduction of hydroxylamine to form NH(3) and H(2)O. The sequence is that of Hydroxylamine reductase from Yersinia pseudotuberculosis serotype O:1b (strain IP 31758).